A 529-amino-acid chain; its full sequence is MQQRRPVRRALLSVSDKAGIVEFAQALSARGVELLSTGGTARLLAEKGLPVTEVSDYTGFPEMMDGRVKTLHPKVHGGILGRRGQDDTIMEEHQIQPIDMVVVNLYPFAQTVAREGCSLEDAVENIDIGGPTMVRSAAKNHKDVAIVVKSSDYDAIIKEIDANEGSLTLETRFDLAIKAFEHTAAYDSMIANYFGSMVPAYHGESKEAAGRFPRTLNLNFIKKQDMRYGENSHQQAAFYIEENVKEASVATATQVQGKALSYNNIADTDAALECVKEFAEPACVIVKHANPCGVAIGNSILDAYDRAYKTDPTSAFGGIIAFNRELDAETAQAIISRQFVEVIIAPSASEEALKITAAKQNVRVLTCGQWGERVPGLDFKRVNGGLLVQDRDLGMVGAEELRVVTKRQPSEQELRDALFCWKVAKFVKSNAIVYAKNNMTIGIGAGQMSRVYSAKIAGIKAADEGLEVKGSSMASDAFFPFRDGIDAAAAAGVTCVIQPGGSIRDDEVIAAADEHGIAMLFTDMRHFRH.

Positions 1 to 148 constitute an MGS-like domain; it reads MQQRRPVRRA…KNHKDVAIVV (148 aa). At Lys287 the chain carries N6-acetyllysine.

Belongs to the PurH family.

It catalyses the reaction (6R)-10-formyltetrahydrofolate + 5-amino-1-(5-phospho-beta-D-ribosyl)imidazole-4-carboxamide = 5-formamido-1-(5-phospho-D-ribosyl)imidazole-4-carboxamide + (6S)-5,6,7,8-tetrahydrofolate. The catalysed reaction is IMP + H2O = 5-formamido-1-(5-phospho-D-ribosyl)imidazole-4-carboxamide. It participates in purine metabolism; IMP biosynthesis via de novo pathway; 5-formamido-1-(5-phospho-D-ribosyl)imidazole-4-carboxamide from 5-amino-1-(5-phospho-D-ribosyl)imidazole-4-carboxamide (10-formyl THF route): step 1/1. It functions in the pathway purine metabolism; IMP biosynthesis via de novo pathway; IMP from 5-formamido-1-(5-phospho-D-ribosyl)imidazole-4-carboxamide: step 1/1. This chain is Bifunctional purine biosynthesis protein PurH, found in Escherichia coli (strain SMS-3-5 / SECEC).